A 340-amino-acid chain; its full sequence is Beta-D-galactofuranosidase xynD (340 aa).

The first 24 residues, 1 to 24 (MKHHNYYPSTCLSILPFLLPLTMS), serve as a signal peptide directing secretion. The active-site Proton acceptor is the aspartate 51. Asparagine 96 and asparagine 165 each carry an N-linked (GlcNAc...) asparagine glycan. The active-site Proton donor is glutamate 222. Residues asparagine 302 and asparagine 328 are each glycosylated (N-linked (GlcNAc...) asparagine).

It belongs to the glycosyl hydrolase 43 family.

The protein localises to the secreted. Its pathway is glycan degradation. Functionally, glycoside hydrolase family 43 beta-D-galactofuranosidase involved in the degradation of beta-galactofuranoside (Galf)-containing glycans such as galactomannan or O-glycans. Is not active on beta-1,5- or beta-1,6-linked beta-D-galactofuranose (Galf) residues. This chain is Beta-D-galactofuranosidase xynD, found in Aspergillus niger (strain ATCC MYA-4892 / CBS 513.88 / FGSC A1513).